A 172-amino-acid polypeptide reads, in one-letter code: Putative phosphoesterase BAMEG_3349 (172 aa).

H34 serves as the catalytic Proton donor. 2 short sequence motifs (HXTX) span residues 34–37 (HITL) and 115–118 (HLTI). H115 acts as the Proton acceptor in catalysis.

The protein belongs to the 2H phosphoesterase superfamily. YjcG family.

This chain is Putative phosphoesterase BAMEG_3349, found in Bacillus anthracis (strain CDC 684 / NRRL 3495).